The sequence spans 371 residues: Heterodimeric geranylgeranyl pyrophosphate synthase large subunit 1, chloroplastic (371 aa).

The transit peptide at 1–51 (MASVTLGSWIVVHHHNHHHPSSILTKSRSRSCPITLTKPISFRSKRTVSSS) directs the protein to the chloroplast. S52 is modified (N-acetylserine). Residues K116, R119, and H148 each contribute to the isopentenyl diphosphate site. Residues D155 and D161 each contribute to the Mg(2+) site. Dimethylallyl diphosphate is bound at residue R166. R167 is an isopentenyl diphosphate binding site. Residues K256, T257, Q294, K311, and K321 each coordinate dimethylallyl diphosphate.

The protein belongs to the FPP/GGPP synthase family. In terms of assembly, forms homodimers. Part of a heterodimeric geranyl(geranyl)diphosphate synthase. Interacts with GGR. Mg(2+) serves as cofactor. As to expression, expressed ubiquitously.

It localises to the plastid. Its subcellular location is the chloroplast. The protein resides in the cytoplasm. The enzyme catalyses isopentenyl diphosphate + dimethylallyl diphosphate = (2E)-geranyl diphosphate + diphosphate. The catalysed reaction is isopentenyl diphosphate + (2E)-geranyl diphosphate = (2E,6E)-farnesyl diphosphate + diphosphate. It catalyses the reaction isopentenyl diphosphate + (2E,6E)-farnesyl diphosphate = (2E,6E,10E)-geranylgeranyl diphosphate + diphosphate. It functions in the pathway isoprenoid biosynthesis; farnesyl diphosphate biosynthesis; farnesyl diphosphate from geranyl diphosphate and isopentenyl diphosphate: step 1/1. Its pathway is isoprenoid biosynthesis; geranyl diphosphate biosynthesis; geranyl diphosphate from dimethylallyl diphosphate and isopentenyl diphosphate: step 1/1. The protein operates within isoprenoid biosynthesis; geranylgeranyl diphosphate biosynthesis; geranylgeranyl diphosphate from farnesyl diphosphate and isopentenyl diphosphate: step 1/1. Functionally, heterodimeric geranyl(geranyl)-diphosphate (GPP) synthase large subunit. In vitro, the large subunit catalyzes mainly the trans-addition of the three molecules of IPP onto DMAPP to form geranylgeranyl pyrophosphate while the small subunit alone is inactive. Upon association of the two subunits, the product profile changes and the production of gerany-diphosphate is strongly increased. The polypeptide is Heterodimeric geranylgeranyl pyrophosphate synthase large subunit 1, chloroplastic (GGPPS1) (Arabidopsis thaliana (Mouse-ear cress)).